Here is a 326-residue protein sequence, read N- to C-terminus: MATTERKPLLLDFEKPLAELANRIDQIRQLAEENGVDVSGEIRKLETRAMQLREEIFSTLSPSQRLQVARHPRRPSTLDYIQAISDEWMELHGDRCGGDDPALIGGVARLGGKPVVMLGHQKGRDTKDNIARNFGMATPGGYRKAMRLMEHANKFSMPILTFIDTPGALPTVVAERQGAGEAIAYNLREMFSLDVPIICTVIGEGGSGGALGIGVGDRLLMFEHSVYTVATPEACAAILWKDASKSPQAAVALKIVSHDLKNLGIIDQILPEPTGGAHSDPLTAATTLKQALLDNLDELDRLTSQERRQLRYDKFRKIGVFTEVAH.

Residues 44-298 enclose the CoA carboxyltransferase C-terminal domain; that stretch reads KLETRAMQLR…KQALLDNLDE (255 aa).

It belongs to the AccA family. In terms of assembly, acetyl-CoA carboxylase is a heterohexamer composed of biotin carboxyl carrier protein (AccB), biotin carboxylase (AccC) and two subunits each of ACCase subunit alpha (AccA) and ACCase subunit beta (AccD).

The protein resides in the cytoplasm. It catalyses the reaction N(6)-carboxybiotinyl-L-lysyl-[protein] + acetyl-CoA = N(6)-biotinyl-L-lysyl-[protein] + malonyl-CoA. The protein operates within lipid metabolism; malonyl-CoA biosynthesis; malonyl-CoA from acetyl-CoA: step 1/1. Its function is as follows. Component of the acetyl coenzyme A carboxylase (ACC) complex. First, biotin carboxylase catalyzes the carboxylation of biotin on its carrier protein (BCCP) and then the CO(2) group is transferred by the carboxyltransferase to acetyl-CoA to form malonyl-CoA. The protein is Acetyl-coenzyme A carboxylase carboxyl transferase subunit alpha of Trichormus variabilis (strain ATCC 29413 / PCC 7937) (Anabaena variabilis).